Consider the following 249-residue polypeptide: General transcription factor IIF subunit 2 (249 aa).

Ala-2 carries the N-acetylalanine modification. 3 positions are modified to N6-acetyllysine: Lys-22, Lys-33, and Lys-137. The residue at position 142 (Ser-142) is a Phosphoserine. The DNA site is built by Gly-227 and His-229. Residue Ser-248 is modified to Phosphoserine.

The protein belongs to the TFIIF beta subunit family. As to quaternary structure, heterodimer of an alpha and a beta subunit. Interacts with HTATSF1 and URI1. Interacts with GPBP1. Interacts with GTF2B (via N-terminus); this interaction is inhibited in presence of GTF2F1. Part of TBP-based Pol II pre-initiation complex (PIC), in which Pol II core assembles with general transcription factors and other specific initiation factors including GTF2E1, GTF2E2, GTF2F1, GTF2F2, TCEA1, ERCC2, ERCC3, GTF2H2, GTF2H3, GTF2H4, GTF2H5, GTF2A1, GTF2A2, GTF2B and TBP; this large multi-subunit PIC complex mediates DNA unwinding and targets Pol II core to the transcription start site where the first phosphodiester bond forms.

It localises to the nucleus. In terms of biological role, TFIIF is a general transcription initiation factor that binds to RNA polymerase II and helps to recruit it to the initiation complex in collaboration with TFIIB. The sequence is that of General transcription factor IIF subunit 2 (Gtf2f2) from Mus musculus (Mouse).